The primary structure comprises 306 residues: Protein FdhE homolog (306 aa).

Belongs to the FdhE family.

The protein resides in the cytoplasm. In terms of biological role, necessary for formate dehydrogenase activity. This chain is Protein FdhE homolog, found in Glaesserella parasuis serovar 5 (strain SH0165) (Haemophilus parasuis).